Here is a 341-residue protein sequence, read N- to C-terminus: Glucokinase (341 aa).

Residue 18–23 (GDIGGT) participates in ATP binding.

It belongs to the bacterial glucokinase family.

It is found in the cytoplasm. The enzyme catalyses D-glucose + ATP = D-glucose 6-phosphate + ADP + H(+). In Mesorhizobium japonicum (strain LMG 29417 / CECT 9101 / MAFF 303099) (Mesorhizobium loti (strain MAFF 303099)), this protein is Glucokinase.